A 493-amino-acid chain; its full sequence is UDP-glucose 6-dehydrogenase (493 aa).

NAD(+) is bound by residues 11-16, Asp36, Arg41, and 89-93; these read GAGYVG and VNTPT. Residues 88 to 110 form a disordered region; it reads SVNTPTKTYGMGKGRAADLKYIE. Lys107 carries the post-translational modification N6-acetyllysine. Residues 129–135 are allosteric switch region; sequence KSTVPVR. Position 130 to 132 (130 to 132) interacts with NAD(+); it reads STV. The active-site Proton donor/acceptor is the Glu161. Substrate contacts are provided by residues 161-165, 220-224, Arg260, and 267-273; these read EFLAE, KLAAN, and KASVGFG. Residue Glu165 coordinates NAD(+). Lys220 (proton donor/acceptor) is an active-site residue. Cys276 (nucleophile) is an active-site residue. 276–279 is an NAD(+) binding site; that stretch reads CFQK. The tract at residues 321–325 is important for formation of active hexamer structure; sequence SLFNT. 338-339 is a binding site for substrate; it reads FK. Arg346 serves as a coordination point for NAD(+). Substrate is bound at residue Arg442. Residues 466–493 form a disordered region; that stretch reads VSSKRIPYTPGEIPKFSLQDPPNKKPKV. Thr474 carries the post-translational modification Phosphothreonine.

The protein belongs to the UDP-glucose/GDP-mannose dehydrogenase family. In terms of assembly, homohexamer.

The catalysed reaction is UDP-alpha-D-glucose + 2 NAD(+) + H2O = UDP-alpha-D-glucuronate + 2 NADH + 3 H(+). It functions in the pathway nucleotide-sugar biosynthesis; UDP-alpha-D-glucuronate biosynthesis; UDP-alpha-D-glucuronate from UDP-alpha-D-glucose: step 1/1. UDP-alpha-D-xylose (UDX) acts as a feedback inhibitor. It binds at the same site as the substrate, but functions as allosteric inhibitor by triggering a conformation change that disrupts the active hexameric ring structure and gives rise to an inactive, horseshoe-shaped hexamer. In terms of biological role, catalyzes the formation of UDP-alpha-D-glucuronate, a constituent of complex glycosaminoglycans. Required for the biosynthesis of chondroitin sulfate and heparan sulfate. Required for embryonic development via its role in the biosynthesis of glycosaminoglycans. Required for proper brain and neuronal development. The chain is UDP-glucose 6-dehydrogenase (Ugdh) from Mus musculus (Mouse).